The following is a 264-amino-acid chain: uncharacterized protein (264 aa).

8 helical membrane passes run 19–39, 42–62, 69–89, 100–120, 136–156, 160–180, 192–212, and 223–243; these read LFPA…LPFL, YDWL…SGLE, VITL…HMGS, IFGV…YLCQ, FAVV…HFSI, WWLS…YEVN, FILI…FGAW, and LVHL…FLIV.

It localises to the cell membrane. This is an uncharacterized protein from Bacillus subtilis (strain 168).